The following is a 502-amino-acid chain: Glycerol kinase (502 aa).

ADP is bound at residue Thr-13. ATP-binding residues include Thr-13, Thr-14, and Ser-15. Sn-glycerol 3-phosphate is bound at residue Thr-13. Position 17 (Arg-17) interacts with ADP. Sn-glycerol 3-phosphate contacts are provided by Arg-83, Glu-84, Tyr-136, and Asp-246. Positions 83, 84, 136, 246, and 247 each coordinate glycerol. Residues Thr-268 and Gly-311 each coordinate ADP. Residues Thr-268, Gly-311, Gln-315, and Gly-412 each contribute to the ATP site. ADP is bound by residues Gly-412 and Asn-416.

It belongs to the FGGY kinase family.

It catalyses the reaction glycerol + ATP = sn-glycerol 3-phosphate + ADP + H(+). It functions in the pathway polyol metabolism; glycerol degradation via glycerol kinase pathway; sn-glycerol 3-phosphate from glycerol: step 1/1. Its activity is regulated as follows. Inhibited by fructose 1,6-bisphosphate (FBP). Key enzyme in the regulation of glycerol uptake and metabolism. Catalyzes the phosphorylation of glycerol to yield sn-glycerol 3-phosphate. This Francisella tularensis subsp. tularensis (strain WY96-3418) protein is Glycerol kinase.